We begin with the raw amino-acid sequence, 121 residues long: uncharacterized protein (121 aa).

Positions 85–111 (NANNDDYESPYKTPKIKSNPSLDSSGS) are disordered. The segment covering 100–111 (IKSNPSLDSSGS) has biased composition (polar residues).

This is an uncharacterized protein from Dictyostelium discoideum (Social amoeba).